The following is a 324-amino-acid chain: GTP cyclohydrolase 1 (324 aa).

Disordered stretches follow at residues 33 to 59 (GRNN…NQAE) and 79 to 119 (VPLA…TPGH). A compositionally biased stretch (low complexity) spans 40-49 (STSSTSGTSS). Composition is skewed to polar residues over residues 50-59 (LADRQQNQAE) and 93-117 (TNGS…STTP). Zn(2+) contacts are provided by C214, H217, and C285.

It belongs to the GTP cyclohydrolase I family. As to quaternary structure, toroid-shaped homodecamer, composed of two pentamers of five dimers. Isoform B is expressed almost exclusively in adult heads.

It catalyses the reaction GTP + H2O = 7,8-dihydroneopterin 3'-triphosphate + formate + H(+). The protein operates within cofactor biosynthesis; 7,8-dihydroneopterin triphosphate biosynthesis; 7,8-dihydroneopterin triphosphate from GTP: step 1/1. Functionally, isoform B is required for eye pigment production, Isoform C may be required for normal embryonic development and segment pattern formation. The chain is GTP cyclohydrolase 1 (Pu) from Drosophila melanogaster (Fruit fly).